The following is a 496-amino-acid chain: Transmembrane protein 104 (496 aa).

Over 1 to 10 the chain is Cytoplasmic; sequence MAGEITETGE. A helical membrane pass occupies residues 11–31; the sequence is LYSSYVGLVYMFNLIVGTGAL. The Extracellular segment spans residues 32–36; that stretch reads TMPKA. Residues 37–57 form a helical membrane-spanning segment; the sequence is FATAGWLVSLVLLVFLGFMSF. At 58-146 the chain is on the cytoplasmic side; the sequence is VTTTFVIEAM…SMFFNKVGVN (89 aa). The helical transmembrane segment at 147 to 167 threads the bilayer; that stretch reads LFYFCIIVYLYGDLAIYAAAV. At 168–204 the chain is on the extracellular side; the sequence is PFSLMQVTCSATGNDSCGVEADTKYNDTDRCWGPLRR. Asparagine 193 is a glycosylation site (N-linked (GlcNAc...) asparagine). The helical transmembrane segment at 205–225 threads the bilayer; it reads VDAYRIYLAIFTLLLGPFTFF. Residues 226-233 lie on the Cytoplasmic side of the membrane; it reads DVQKTKYL. A helical membrane pass occupies residues 234–254; the sequence is QILTSLMRWIAFAVMIVLALI. At 255 to 276 the chain is on the extracellular side; it reads RIGHGQGEGHPPLADFSGVRNL. The helical transmembrane segment at 277–297 threads the bilayer; that stretch reads FGVCVYSFMCQHSLPSLITPV. The Cytoplasmic segment spans residues 298-306; sequence SSKRHLTRL. A helical membrane pass occupies residues 307-327; that stretch reads VFLDYVLILAFYGLLSFTAIF. The Extracellular segment spans residues 328-354; the sequence is CFRGDSLMDMYTLNFARCDVVGLAAVR. The helical transmembrane segment at 355 to 375 threads the bilayer; that stretch reads FFLGLFPVFTISTNFPIIAVT. Residues 376-397 are Cytoplasmic-facing; it reads LRNNWKTLFHREGGTYPWVVDR. A helical membrane pass occupies residues 398 to 418; it reads VVFPTITLVPPVLVAFCTHDL. The Extracellular portion of the chain corresponds to 419 to 421; it reads ESL. A helical membrane pass occupies residues 422–442; the sequence is VGITGAYAGTGIQYVIPAFLV. Residues 443 to 470 are Cytoplasmic-facing; the sequence is YHCRRDTQLAFGCGVSNKHRSPFRHTFW. A helical transmembrane segment spans residues 471-491; the sequence is VGFVLLWAFSCFIFVTANIIL. The Extracellular portion of the chain corresponds to 492 to 496; it reads SETKL.

This sequence belongs to the TMEM104 family.

Its subcellular location is the membrane. This chain is Transmembrane protein 104 (TMEM104), found in Homo sapiens (Human).